A 374-amino-acid polypeptide reads, in one-letter code: Mannitol-1-phosphate 5-dehydrogenase (374 aa).

3 to 14 (AIHFGAGNIGRG) contributes to the NAD(+) binding site.

This sequence belongs to the mannitol dehydrogenase family.

It catalyses the reaction D-mannitol 1-phosphate + NAD(+) = beta-D-fructose 6-phosphate + NADH + H(+). The chain is Mannitol-1-phosphate 5-dehydrogenase from Halalkalibacterium halodurans (strain ATCC BAA-125 / DSM 18197 / FERM 7344 / JCM 9153 / C-125) (Bacillus halodurans).